The sequence spans 284 residues: MEMO1 family protein Saci_0089 (284 aa).

Belongs to the MEMO1 family.

This chain is MEMO1 family protein Saci_0089, found in Sulfolobus acidocaldarius (strain ATCC 33909 / DSM 639 / JCM 8929 / NBRC 15157 / NCIMB 11770).